The sequence spans 119 residues: Ribonuclease P protein component (119 aa).

It belongs to the RnpA family. Consists of a catalytic RNA component (M1 or rnpB) and a protein subunit.

The enzyme catalyses Endonucleolytic cleavage of RNA, removing 5'-extranucleotides from tRNA precursor.. Functionally, RNaseP catalyzes the removal of the 5'-leader sequence from pre-tRNA to produce the mature 5'-terminus. It can also cleave other RNA substrates such as 4.5S RNA. The protein component plays an auxiliary but essential role in vivo by binding to the 5'-leader sequence and broadening the substrate specificity of the ribozyme. The polypeptide is Ribonuclease P protein component (Listeria welshimeri serovar 6b (strain ATCC 35897 / DSM 20650 / CCUG 15529 / CIP 8149 / NCTC 11857 / SLCC 5334 / V8)).